The sequence spans 209 residues: Small ribosomal subunit protein uS4 (209 aa).

Positions 98–161 (TRLDNVVYRM…AKQLRVQEAL (64 aa)) constitute an S4 RNA-binding domain.

The protein belongs to the universal ribosomal protein uS4 family. In terms of assembly, part of the 30S ribosomal subunit. Contacts protein S5. The interaction surface between S4 and S5 is involved in control of translational fidelity.

One of the primary rRNA binding proteins, it binds directly to 16S rRNA where it nucleates assembly of the body of the 30S subunit. Functionally, with S5 and S12 plays an important role in translational accuracy. In Stenotrophomonas maltophilia (strain R551-3), this protein is Small ribosomal subunit protein uS4.